A 275-amino-acid chain; its full sequence is Putative phosphoenolpyruvate synthase regulatory protein (275 aa).

153–160 (GVSRSGKT) lines the ADP pocket.

It belongs to the pyruvate, phosphate/water dikinase regulatory protein family. PSRP subfamily.

The enzyme catalyses [pyruvate, water dikinase] + ADP = [pyruvate, water dikinase]-phosphate + AMP + H(+). The catalysed reaction is [pyruvate, water dikinase]-phosphate + phosphate + H(+) = [pyruvate, water dikinase] + diphosphate. Its function is as follows. Bifunctional serine/threonine kinase and phosphorylase involved in the regulation of the phosphoenolpyruvate synthase (PEPS) by catalyzing its phosphorylation/dephosphorylation. This is Putative phosphoenolpyruvate synthase regulatory protein from Nitrosomonas eutropha (strain DSM 101675 / C91 / Nm57).